The following is a 130-amino-acid chain: uncharacterized protein (130 aa).

This is an uncharacterized protein from Sinorhizobium fredii (strain NBRC 101917 / NGR234).